Reading from the N-terminus, the 622-residue chain is Sodium-coupled monocarboxylate transporter 1 (622 aa).

Topologically, residues 1-15 (MVTPGNIGSFTVWDY) are extracellular. Residues 16–36 (LVFALMLLISAVIGIYYAFAG) traverse the membrane as a helical segment. At 37–51 (GGQKTSKDFLMGGRS) the chain is on the cytoplasmic side. A helical transmembrane segment spans residues 52–72 (MTAVPVALSLTASFMSAVTVL). The Extracellular segment spans residues 73-83 (GTPAEVYRFGA). Residues 84–104 (MFIIFAFSYTIVVIISSEVFL) traverse the membrane as a helical segment. At 105–128 (PVFYRLGITSTYEYLELRFNKFVR) the chain is on the cytoplasmic side. Residues 129–149 (LLGTILFIIQTVLYTGIVIYA) form a helical membrane-spanning segment. Topologically, residues 150 to 161 (PALALNQVTGFD) are extracellular. Residues 162 to 182 (LWGAVVATGVVCTFYCTMGGL) form a helical membrane-spanning segment. The Cytoplasmic segment spans residues 183-184 (KA). The chain crosses the membrane as a helical span at residues 185 to 205 (VVWTDVFQVGIMVAGFTSVII). Over 206 to 241 (RAVVVQGGIGPILNDSYYGDRLNFWDFDPNPLKRHT) the chain is Extracellular. Asn-219 carries N-linked (GlcNAc...) asparagine glycosylation. The chain crosses the membrane as a helical span at residues 242-262 (FWTIVVGGTFTWTGIYGVNQA). Residues 263–283 (QVQRYIACKTRFQAKMSLYVN) are Cytoplasmic-facing. A helical transmembrane segment spans residues 284–304 (LIGLWAILACAVLSGLAMYSI). The Extracellular portion of the chain corresponds to 305 to 336 (YKDCDPWTAKFVSAPDQLMPYLALDILRDYPG). A helical membrane pass occupies residues 337-357 (LPGLFVSCAYSGTLSTVSSSI). The Cytoplasmic portion of the chain corresponds to 358–389 (NALAAVTVEDLIKPYIRSLSEKKMSWISKGTS). A helical transmembrane segment spans residues 390–410 (LLYGAICIGMAGIASLMGGLL). The Extracellular segment spans residues 411-415 (QAALS). The chain crosses the membrane as a helical span at residues 416-436 (IFGMVGGPLLGLFSLGILFPF). Over 437-438 (VN) the chain is Cytoplasmic. Residues 439–459 (SLGAVIGLLSGFAISLWVGIG) form a helical membrane-spanning segment. The Extracellular segment spans residues 460–521 (SQIYAPSPSS…LADSWYSLSY (62 aa)). Residues Asn-481 and Asn-488 are each glycosylated (N-linked (GlcNAc...) asparagine). Residues 522 to 542 (LYFSTIGTIVAVLVGVIVSLL) traverse the membrane as a helical segment. Topologically, residues 543-622 (SGGLKQNVNR…KGEKTNGITA (80 aa)) are cytoplasmic. Residues 591 to 622 (DNDMEQGTDNPAFNNMEMTSTEKGEKTNGITA) are disordered. Residues 595–609 (EQGTDNPAFNNMEMT) show a composition bias toward polar residues.

It belongs to the sodium:solute symporter (SSF) (TC 2.A.21) family. As to expression, in the gastrula and neurula stages, expressed in the gastrula anterior endoderm and in the entire circumference of the blastopore lip superficial endoderm. At tailbud stages, abundant expression observed in the ventral midgut region. As development proceeds expression becomes restricted to the liver diverticulum and ultimately to the presumptive gallbladder, by tadpole stage 35. Also present in pronephros and the tip of the tail.

Its subcellular location is the apical cell membrane. The catalysed reaction is (S)-lactate(out) + 2 Na(+)(out) = (S)-lactate(in) + 2 Na(+)(in). It carries out the reaction propanoate(out) + 2 Na(+)(out) = propanoate(in) + 2 Na(+)(in). The enzyme catalyses pyruvate(out) + 2 Na(+)(out) = pyruvate(in) + 2 Na(+)(in). It catalyses the reaction acetate(out) + 2 Na(+)(out) = acetate(in) + 2 Na(+)(in). The catalysed reaction is butanoate(out) + 2 Na(+)(out) = butanoate(in) + 2 Na(+)(in). It carries out the reaction nicotinate(out) + 2 Na(+)(out) = nicotinate(in) + 2 Na(+)(in). The enzyme catalyses (R)-3-hydroxybutanoate(out) + 2 Na(+)(out) = (R)-3-hydroxybutanoate(in) + 2 Na(+)(in). It catalyses the reaction acetoacetate(out) + 2 Na(+)(out) = acetoacetate(in) + 2 Na(+)(in). The catalysed reaction is 4-methyl-2-oxopentanoate(out) + 2 Na(+)(out) = 4-methyl-2-oxopentanoate(in) + 2 Na(+)(in). It carries out the reaction 5-oxo-L-proline(out) + 2 Na(+)(out) = 5-oxo-L-proline(in) + 2 Na(+)(in). The enzyme catalyses iodide(out) = iodide(in). It catalyses the reaction chloride(in) = chloride(out). The catalysed reaction is nitrate(in) = nitrate(out). It carries out the reaction bromide(in) = bromide(out). Functionally, acts as an electrogenic sodium (Na(+)) and chloride (Cl-)-dependent sodium-coupled solute transporter, including transport of monocarboxylates (short-chain fatty acids including L-lactate, D-lactate, pyruvate, acetate, propionate, valerate and butyrate), mocarboxylate drugs (nicotinate, benzoate, salicylate and 5-aminosalicylate) and ketone bodies (beta-D-hydroxybutyrate, acetoacetate and alpha-ketoisocaproate), with a Na(+):substrate stoichiometry of between 4:1 and 2:1. Catalyzes passive carrier mediated diffusion of iodide. Mediates iodide transport from the thyrocyte into the colloid lumen through the apical membrane. Mediates sodium-coupled electrogenic transport of pyroglutamate (5-oxo-L-proline). Can mediate the transport of chloride, bromide, iodide and nitrate ions when external concentration of sodium ions is reduced. This is Sodium-coupled monocarboxylate transporter 1 from Xenopus laevis (African clawed frog).